The following is a 504-amino-acid chain: Galactan beta-1,4-galactosyltransferase GALS3 (504 aa).

A helical membrane pass occupies residues 30 to 50; it reads LTFMALLVLCTLATLLPFIPS. Residues 242–456 enclose the GT92 domain; that stretch reads DYLYCGSSLY…YHGSISQRRE (215 aa).

This sequence belongs to the glycosyltransferase 92 family. In terms of tissue distribution, expressed in root caps, mature leaves, top of the stems and seeds.

The protein localises to the golgi apparatus membrane. In terms of biological role, involved in the biosynthesis of beta-1,4-galactan. Beta-1,4-galactans are abundant polysaccharides in plant cell walls and are found as side-chain of rhamnogalacturonan I, which is a major component of pectin. This is Galactan beta-1,4-galactosyltransferase GALS3 from Arabidopsis thaliana (Mouse-ear cress).